We begin with the raw amino-acid sequence, 417 residues long: NADH-quinone oxidoreductase subunit D (417 aa).

It belongs to the complex I 49 kDa subunit family. In terms of assembly, NDH-1 is composed of 14 different subunits. Subunits NuoB, C, D, E, F, and G constitute the peripheral sector of the complex.

The protein resides in the cell inner membrane. The enzyme catalyses a quinone + NADH + 5 H(+)(in) = a quinol + NAD(+) + 4 H(+)(out). In terms of biological role, NDH-1 shuttles electrons from NADH, via FMN and iron-sulfur (Fe-S) centers, to quinones in the respiratory chain. The immediate electron acceptor for the enzyme in this species is believed to be ubiquinone. Couples the redox reaction to proton translocation (for every two electrons transferred, four hydrogen ions are translocated across the cytoplasmic membrane), and thus conserves the redox energy in a proton gradient. This Burkholderia orbicola (strain MC0-3) protein is NADH-quinone oxidoreductase subunit D.